Consider the following 554-residue polypeptide: 2-succinyl-5-enolpyruvyl-6-hydroxy-3-cyclohexene-1-carboxylate synthase (554 aa).

This sequence belongs to the TPP enzyme family. MenD subfamily. Homodimer. Mg(2+) is required as a cofactor. Requires Mn(2+) as cofactor. The cofactor is thiamine diphosphate.

It catalyses the reaction isochorismate + 2-oxoglutarate + H(+) = 5-enolpyruvoyl-6-hydroxy-2-succinyl-cyclohex-3-ene-1-carboxylate + CO2. It participates in quinol/quinone metabolism; 1,4-dihydroxy-2-naphthoate biosynthesis; 1,4-dihydroxy-2-naphthoate from chorismate: step 2/7. It functions in the pathway quinol/quinone metabolism; menaquinone biosynthesis. Its function is as follows. Catalyzes the thiamine diphosphate-dependent decarboxylation of 2-oxoglutarate and the subsequent addition of the resulting succinic semialdehyde-thiamine pyrophosphate anion to isochorismate to yield 2-succinyl-5-enolpyruvyl-6-hydroxy-3-cyclohexene-1-carboxylate (SEPHCHC). This is 2-succinyl-5-enolpyruvyl-6-hydroxy-3-cyclohexene-1-carboxylate synthase from Lactococcus lactis subsp. cremoris (strain SK11).